The sequence spans 175 residues: Gamma-crystallin B (175 aa).

Beta/gamma crystallin 'Greek key' domains are found at residues 2–40 (GKIT…RVDS) and 41–83 (GCWM…RLIP). Residues 84-88 (QHSGT) are connecting peptide. 2 consecutive Beta/gamma crystallin 'Greek key' domains span residues 89–129 (FRMR…NVLD) and 130–172 (GCWV…RRVM).

This sequence belongs to the beta/gamma-crystallin family. In terms of assembly, monomer.

Crystallins are the dominant structural components of the vertebrate eye lens. This is Gamma-crystallin B (CRYGB) from Canis lupus familiaris (Dog).